Reading from the N-terminus, the 419-residue chain is Interferon regulatory factor 3 (419 aa).

The residue at position 3 (Thr-3) is a Phosphothreonine. The segment at residues 5–111 (KPRILPWLIS…DPHKIYEFVT (107 aa)) is a DNA-binding region (IRF tryptophan pentad repeat). Position 14 is a phosphoserine (Ser-14). Thr-75 carries the post-translational modification Phosphothreonine. 2 positions are modified to phosphoserine: Ser-97 and Ser-123. The disordered stretch occupies residues 118–137 (PEPDTSLDLSGRYSTSDTHE). The tract at residues 140–419 (LDKLLSGMDL…LRDLVEDMDF (280 aa)) is mediates interaction with ZDHHC11. Lys-191 participates in a covalent cross-link: Glycyl lysine isopeptide (Lys-Gly) (interchain with G-Cter in ISG15). The interval 198–358 (DEWEFQVTVF…SWPQDEPWVK (161 aa)) is interaction with HERC5. Thr-235 and Thr-251 each carry phosphothreonine. Cysteines 265 and 287 form a disulfide. Glycyl lysine isopeptide (Lys-Gly) (interchain with G-Cter in ISG15) cross-links involve residues Lys-358 and Lys-364. Lys-364 bears the N6-acetyllysine mark. Ser-383 carries the phosphoserine modification. Residue Ser-384 is modified to Diphosphoserine. The residue at position 384 (Ser-384) is a Phosphoserine; by TBK1. Position 394 is a phosphoserine; by IKKE (Ser-394). A Phosphoserine modification is found at Ser-396. A Phosphothreonine modification is found at Thr-402.

Belongs to the IRF family. Monomer. Homodimer; phosphorylation-induced. Interacts (when phosphorylated) with CREBBP. Interacts with MAVS (via phosphorylated pLxIS motif). Interacts with TICAM1 (via phosphorylated pLxIS motif). Interacts with STING1 (via phosphorylated pLxIS motif). Interacts with IKBKE and TBK1. Interacts with TICAM2. Interacts with RBCK1. Interacts with HERC5. Interacts with DDX3X; the interaction allows the phosphorylation and activation of IRF3 by IKBKE. Interacts with TRIM21 and ULK1, in the presence of TRIM21; this interaction leads to IRF3 degradation by autophagy. Interacts with RIOK3; RIOK3 probably mediates the interaction of TBK1 with IRF3. Interacts with ILRUN; the interaction inhibits IRF3 binding to its DNA consensus sequence. Interacts with LYAR; this interaction impairs IRF3 DNA-binding activity. Interacts with TRAF3. Interacts with ZDHHC11; ZDHHC11 recruits IRF3 to STING1 upon DNA virus infection and thereby promotes IRF3 activation. Interacts with HSP90AA1; the interaction mediates IRF3 association with TOMM70. Interacts with BCL2; the interaction decreases upon Sendai virus infection. Interacts with BAX; the interaction is direct, increases upon virus infection and mediates the formation of the apoptosis complex TOMM70:HSP90AA1:IRF3:BAX. Interacts with DDX56. Interacts with NBR1. In terms of assembly, (Microbial infection) Interacts with Porcine epidemic diarrhea virus E protein; this interaction prevents IRF3 translocation to the nucleus and thereby prevents type I interferon production. As to quaternary structure, (Microbial infection) Interacts with African swine fever virus (ASFV) P14.5/E120R; this interaction interferes with the recruitment of IRF3 to TBK1, which in turn suppresses IRF3 phosphorylation, decreasing interferon production via the cGAS/STING pathway. (Microbial infection) Interacts with African swine fever virus (ASFV) MGF360-14L; this interaction mediates degradation of IRF3 through TRIM21 and ubiquitin-meditated proteolysis. In terms of assembly, (Microbial infection) Interacts with African swine fever virus (ASFV) E301R; this interaction inhibits nuclear translocation of IRF3 to the nucleus. As to quaternary structure, (Microbial infection) Interacts with African swine fever virus (ASFV) minor capsid protein M1249L; this interaction mediates IRF3 degradation. In terms of processing, constitutively phosphorylated on many Ser/Thr residues. Activated following phosphorylation by TBK1 and IKBKE. Innate adapter proteins, such as MAVS, STING1 or TICAM1, are first activated by viral RNA, cytosolic DNA, and bacterial lipopolysaccharide (LPS), respectively, leading to activation of the kinases TBK1 and IKBKE. These kinases then phosphorylate the adapter proteins on the pLxIS motif, leading to recruitment of IRF3, thereby licensing IRF3 for phosphorylation by TBK1. Phosphorylation at Ser-384 is followed by pyrophosphorylation at the same residue, promoting phosphorylation at Ser-394. Phosphorylated IRF3 dissociates from the adapter proteins, dimerizes, and then enters the nucleus to induce IFNs. Post-translationally, pyrophosphorylated by UAP1 following phosphorylation at Ser-384 by TBK1. Pyrophosphorylation promotes subsequent phosphorylation at Ser-394, leading to homodimerization of IRF3. Acetylation at Lys-364 by KAT8 inhibits recruimtent to promoters and transcription factor activity. Acetylation by KAT8 is promoted by phosphorylation at Ser-394. In terms of processing, ubiquitinated; ubiquitination involves RBCK1 leading to proteasomal degradation. Polyubiquitinated; ubiquitination involves TRIM21 leading to proteasomal degradation. Ubiquitinated by UBE3C, leading to its degradation. Deubiquitinated by USP5 on both 'Lys-48'-linked unanchored and 'Lys-63'-linked anchored polyubiquitin, leading to inhibition of antiviral innate immunity. Post-translationally, ISGylated by HERC5 resulting in sustained IRF3 activation and in the inhibition of IRF3 ubiquitination by disrupting PIN1 binding. The phosphorylation state of IRF3 does not alter ISGylation. (Microbial infection) Phosphorylated by pseudorabies virus protein kinase UL13; leading to decreased IRF3 binding to the IRF3-responsive promoters and downstream ISG expression. In terms of processing, proteolytically cleaved by apoptotic caspases during apoptosis, leading to its inactivation. Cleavage by CASP3 during virus-induced apoptosis inactivates it, preventing cytokine overproduction.

Its subcellular location is the cytoplasm. The protein localises to the nucleus. It localises to the mitochondrion. In the absence of viral infection, maintained as a monomer in an autoinhibited state. Phosphorylation by TBK1 and IKBKE disrupts this autoinhibition leading to the liberation of the DNA-binding and dimerization activities and its nuclear localization where it can activate type I IFN and ISG genes. Phosphorylation and activation follow the following steps: innate adapter proteins, such as MAVS, STING1 or TICAM1, are first activated by viral RNA, cytosolic DNA and bacterial lipopolysaccharide (LPS), respectively, leading to activation of the kinases TBK1 and IKBKE. These kinases then phosphorylate the adapter proteins on their pLxIS motif, leading to recruitment of IRF3, thereby licensing IRF3 for phosphorylation by TBK1. Phosphorylated IRF3 dissociates from the adapter proteins, dimerizes, and then enters the nucleus to induce IFNs. Key transcriptional regulator of type I interferon (IFN)-dependent immune responses which plays a critical role in the innate immune response against DNA and RNA viruses. Regulates the transcription of type I IFN genes (IFN-alpha and IFN-beta) and IFN-stimulated genes (ISG) by binding to an interferon-stimulated response element (ISRE) in their promoters. Acts as a more potent activator of the IFN-beta (IFNB) gene than the IFN-alpha (IFNA) gene and plays a critical role in both the early and late phases of the IFNA/B gene induction. Found in an inactive form in the cytoplasm of uninfected cells and following viral infection, double-stranded RNA (dsRNA), or toll-like receptor (TLR) signaling, is phosphorylated by IKBKE and TBK1 kinases. This induces a conformational change, leading to its dimerization and nuclear localization and association with CREB binding protein (CREBBP) to form dsRNA-activated factor 1 (DRAF1), a complex which activates the transcription of the type I IFN and ISG genes. Can activate distinct gene expression programs in macrophages and can induce significant apoptosis in primary macrophages. This chain is Interferon regulatory factor 3 (IRF3), found in Sus scrofa (Pig).